A 628-amino-acid polypeptide reads, in one-letter code: DNA-directed RNA polymerase subunit gamma (628 aa).

Zn(2+) is bound by residues Cys-71, Cys-73, Cys-86, and Cys-89. The Mg(2+) site is built by Asp-467, Asp-469, and Asp-471.

Belongs to the RNA polymerase beta' chain family. RpoC1 subfamily. As to quaternary structure, in cyanobacteria the RNAP catalytic core is composed of 2 alpha, 1 beta, 1 beta', 1 gamma and 1 omega subunit. When a sigma factor is associated with the core the holoenzyme is formed, which can initiate transcription. Mg(2+) is required as a cofactor. Zn(2+) serves as cofactor.

The enzyme catalyses RNA(n) + a ribonucleoside 5'-triphosphate = RNA(n+1) + diphosphate. In terms of biological role, DNA-dependent RNA polymerase catalyzes the transcription of DNA into RNA using the four ribonucleoside triphosphates as substrates. The polypeptide is DNA-directed RNA polymerase subunit gamma (Crocosphaera subtropica (strain ATCC 51142 / BH68) (Cyanothece sp. (strain ATCC 51142))).